Consider the following 83-residue polypeptide: Exodeoxyribonuclease 7 small subunit (83 aa).

The protein belongs to the XseB family. Heterooligomer composed of large and small subunits.

Its subcellular location is the cytoplasm. The enzyme catalyses Exonucleolytic cleavage in either 5'- to 3'- or 3'- to 5'-direction to yield nucleoside 5'-phosphates.. Functionally, bidirectionally degrades single-stranded DNA into large acid-insoluble oligonucleotides, which are then degraded further into small acid-soluble oligonucleotides. The sequence is that of Exodeoxyribonuclease 7 small subunit from Bradyrhizobium diazoefficiens (strain JCM 10833 / BCRC 13528 / IAM 13628 / NBRC 14792 / USDA 110).